The following is a 151-amino-acid chain: MKVILLKDVAKLGKKGEIKEVSDGYGRNYLIPRGLAVEATKSELSKLKNIEDQKKKKEERTKANSEELLRKIKQRHFRMKVKAGASGKLFGAVTSADIAELIAKELGTEFSKRYVDLKENIKNTGEYKVNLKLPGNVKGSIIIAIEKSEED.

The protein belongs to the bacterial ribosomal protein bL9 family.

Functionally, binds to the 23S rRNA. This is Large ribosomal subunit protein bL9 from Kosmotoga olearia (strain ATCC BAA-1733 / DSM 21960 / TBF 19.5.1).